A 186-amino-acid chain; its full sequence is Pyridoxal 5'-phosphate synthase subunit PdxT (186 aa).

46–48 (GES) contacts L-glutamine. Cys75 serves as the catalytic Nucleophile. Residues Arg101 and 129 to 130 (IR) each bind L-glutamine. Residues His165 and Glu167 each act as charge relay system in the active site.

This sequence belongs to the glutaminase PdxT/SNO family. In terms of assembly, in the presence of PdxS, forms a dodecamer of heterodimers. Only shows activity in the heterodimer.

The catalysed reaction is aldehydo-D-ribose 5-phosphate + D-glyceraldehyde 3-phosphate + L-glutamine = pyridoxal 5'-phosphate + L-glutamate + phosphate + 3 H2O + H(+). The enzyme catalyses L-glutamine + H2O = L-glutamate + NH4(+). The protein operates within cofactor biosynthesis; pyridoxal 5'-phosphate biosynthesis. Functionally, catalyzes the hydrolysis of glutamine to glutamate and ammonia as part of the biosynthesis of pyridoxal 5'-phosphate. The resulting ammonia molecule is channeled to the active site of PdxS. The polypeptide is Pyridoxal 5'-phosphate synthase subunit PdxT (Staphylococcus aureus (strain Mu3 / ATCC 700698)).